Reading from the N-terminus, the 275-residue chain is NH(3)-dependent NAD(+) synthetase (275 aa).

An ATP-binding site is contributed by 46-53 (GISGGQDS). Aspartate 52 contributes to the Mg(2+) binding site. Arginine 140 contributes to the deamido-NAD(+) binding site. Residue threonine 160 participates in ATP binding. Position 165 (glutamate 165) interacts with Mg(2+). Residues lysine 173 and aspartate 180 each contribute to the deamido-NAD(+) site. 2 residues coordinate ATP: lysine 189 and threonine 211. Residue 260 to 261 (HK) coordinates deamido-NAD(+).

The protein belongs to the NAD synthetase family. Homodimer.

The enzyme catalyses deamido-NAD(+) + NH4(+) + ATP = AMP + diphosphate + NAD(+) + H(+). Its pathway is cofactor biosynthesis; NAD(+) biosynthesis; NAD(+) from deamido-NAD(+) (ammonia route): step 1/1. Its function is as follows. Catalyzes the ATP-dependent amidation of deamido-NAD to form NAD. Uses ammonia as a nitrogen source. The polypeptide is NH(3)-dependent NAD(+) synthetase (Salmonella dublin (strain CT_02021853)).